The primary structure comprises 138 residues: Ribosome-binding factor A (138 aa).

Residues 117 to 138 (ERQNKPAASTEKPPVGSLDADL) form a disordered region.

It belongs to the RbfA family. Monomer. Binds 30S ribosomal subunits, but not 50S ribosomal subunits or 70S ribosomes.

Its subcellular location is the cytoplasm. In terms of biological role, one of several proteins that assist in the late maturation steps of the functional core of the 30S ribosomal subunit. Associates with free 30S ribosomal subunits (but not with 30S subunits that are part of 70S ribosomes or polysomes). Required for efficient processing of 16S rRNA. May interact with the 5'-terminal helix region of 16S rRNA. The polypeptide is Ribosome-binding factor A (Acaryochloris marina (strain MBIC 11017)).